Consider the following 420-residue polypeptide: MTTLDAVVYGADELVAGPATDGRRLETYEDGAVAIVDGTVAAVGPTTEVTAEYPPESANHAVDADGQAVIPGFVDPHTHALFAGDRSDEFAAKLRGKSYQDILAEGGGILRTVRAVRDADEETLLSNLLAHLDTMLAHGTTTVEVKSGYGLDTETELQMLRVIDSADAVHPVDVVPTFMGAHAVPEGWDTDDYTAAVVDEQVPAVESQGIAEFCDVFCEEGVFSVAQSRRVLEAGAAAGLTPKVHAEELAHIGGTQLAADVGAASADHLLHATGEDIDALVDAAVTPVLLPGTAFGLGAAYADATAFRDRGAPVAVATDFNPNCHSHSMGFALSLACVEMGLTPAEALIAGTKHAALALDRTDGLGTLREGAPGDAVVLAAPSHVHIPYQYGTNVVDAILKDGSVVSTPTHESYDREVQP.

Fe(3+) contacts are provided by H77 and H79. Residues H77 and H79 each coordinate Zn(2+). Residues R86, Y149, and H182 each coordinate 4-imidazolone-5-propanoate. Position 149 (Y149) interacts with N-formimidoyl-L-glutamate. H245 lines the Fe(3+) pocket. H245 is a Zn(2+) binding site. Residue E248 coordinates 4-imidazolone-5-propanoate. D319 contacts Fe(3+). D319 serves as a coordination point for Zn(2+). N321 provides a ligand contact to N-formimidoyl-L-glutamate.

Belongs to the metallo-dependent hydrolases superfamily. HutI family. The cofactor is Zn(2+). Fe(3+) is required as a cofactor.

Its subcellular location is the cytoplasm. It catalyses the reaction 4-imidazolone-5-propanoate + H2O = N-formimidoyl-L-glutamate. The protein operates within amino-acid degradation; L-histidine degradation into L-glutamate; N-formimidoyl-L-glutamate from L-histidine: step 3/3. Functionally, catalyzes the hydrolytic cleavage of the carbon-nitrogen bond in imidazolone-5-propanoate to yield N-formimidoyl-L-glutamate. It is the third step in the universal histidine degradation pathway. This chain is Imidazolonepropionase, found in Haloarcula marismortui (strain ATCC 43049 / DSM 3752 / JCM 8966 / VKM B-1809) (Halobacterium marismortui).